The chain runs to 643 residues: Phosphomethylpyrimidine synthase (643 aa).

Substrate contacts are provided by residues Asn248, Met277, Tyr306, His342, 362–364 (SRG), 403–406 (DGLR), and Glu442. His446 is a Zn(2+) binding site. Tyr469 is a binding site for substrate. A Zn(2+)-binding site is contributed by His510. [4Fe-4S] cluster is bound by residues Cys590, Cys593, and Cys598.

It belongs to the ThiC family. In terms of assembly, homodimer. Requires [4Fe-4S] cluster as cofactor.

It catalyses the reaction 5-amino-1-(5-phospho-beta-D-ribosyl)imidazole + S-adenosyl-L-methionine = 4-amino-2-methyl-5-(phosphooxymethyl)pyrimidine + CO + 5'-deoxyadenosine + formate + L-methionine + 3 H(+). Its pathway is cofactor biosynthesis; thiamine diphosphate biosynthesis. Functionally, catalyzes the synthesis of the hydroxymethylpyrimidine phosphate (HMP-P) moiety of thiamine from aminoimidazole ribotide (AIR) in a radical S-adenosyl-L-methionine (SAM)-dependent reaction. The polypeptide is Phosphomethylpyrimidine synthase (Burkholderia lata (strain ATCC 17760 / DSM 23089 / LMG 22485 / NCIMB 9086 / R18194 / 383)).